The following is a 290-amino-acid chain: Porphobilinogen deaminase (290 aa).

Cysteine 237 bears the S-(dipyrrolylmethanemethyl)cysteine mark.

It belongs to the HMBS family. As to quaternary structure, monomer. The cofactor is dipyrromethane.

It catalyses the reaction 4 porphobilinogen + H2O = hydroxymethylbilane + 4 NH4(+). It participates in porphyrin-containing compound metabolism; protoporphyrin-IX biosynthesis; coproporphyrinogen-III from 5-aminolevulinate: step 2/4. Its function is as follows. Tetrapolymerization of the monopyrrole PBG into the hydroxymethylbilane pre-uroporphyrinogen in several discrete steps. The polypeptide is Porphobilinogen deaminase (Clostridium botulinum (strain 657 / Type Ba4)).